The chain runs to 276 residues: Ribosomal RNA small subunit methyltransferase A (276 aa).

S-adenosyl-L-methionine is bound by residues N27, L29, G54, E75, D101, and N123.

Belongs to the class I-like SAM-binding methyltransferase superfamily. rRNA adenine N(6)-methyltransferase family. RsmA subfamily.

Its subcellular location is the cytoplasm. It carries out the reaction adenosine(1518)/adenosine(1519) in 16S rRNA + 4 S-adenosyl-L-methionine = N(6)-dimethyladenosine(1518)/N(6)-dimethyladenosine(1519) in 16S rRNA + 4 S-adenosyl-L-homocysteine + 4 H(+). Its function is as follows. Specifically dimethylates two adjacent adenosines (A1518 and A1519) in the loop of a conserved hairpin near the 3'-end of 16S rRNA in the 30S particle. May play a critical role in biogenesis of 30S subunits. This Bartonella quintana (strain Toulouse) (Rochalimaea quintana) protein is Ribosomal RNA small subunit methyltransferase A.